The primary structure comprises 243 residues: Small ribosomal subunit protein uS3 (243 aa).

The KH type-2 domain maps to 39-110 (IRTFIQKKYS…QVRINVVEVE (72 aa)). A disordered region spans residues 221–243 (GAIPRRKGSRKPQQFEDRSNENS). Residues 233–243 (QQFEDRSNENS) show a composition bias toward basic and acidic residues.

Belongs to the universal ribosomal protein uS3 family. In terms of assembly, part of the 30S ribosomal subunit. Forms a tight complex with proteins S10 and S14.

Binds the lower part of the 30S subunit head. Binds mRNA in the 70S ribosome, positioning it for translation. The polypeptide is Small ribosomal subunit protein uS3 (Prochlorococcus marinus subsp. pastoris (strain CCMP1986 / NIES-2087 / MED4)).